Reading from the N-terminus, the 354-residue chain is tRNA-specific 2-thiouridylase MnmA (354 aa).

ATP is bound by residues 7–14 and methionine 33; that span reads AMSGGVDS. Cysteine 94 functions as the Nucleophile in the catalytic mechanism. Cysteine 94 and cysteine 192 are joined by a disulfide. Position 118 (glycine 118) interacts with ATP. Residues 141–143 are interaction with tRNA; it reads KDQ. Catalysis depends on cysteine 192, which acts as the Cysteine persulfide intermediate. The interaction with tRNA stretch occupies residues 296–297; it reads RY.

Belongs to the MnmA/TRMU family.

The protein resides in the cytoplasm. The enzyme catalyses S-sulfanyl-L-cysteinyl-[protein] + uridine(34) in tRNA + AH2 + ATP = 2-thiouridine(34) in tRNA + L-cysteinyl-[protein] + A + AMP + diphosphate + H(+). Functionally, catalyzes the 2-thiolation of uridine at the wobble position (U34) of tRNA, leading to the formation of s(2)U34. The polypeptide is tRNA-specific 2-thiouridylase MnmA (Trichlorobacter lovleyi (strain ATCC BAA-1151 / DSM 17278 / SZ) (Geobacter lovleyi)).